The following is a 723-amino-acid chain: Malate synthase G (723 aa).

Acetyl-CoA is bound by residues V118, 125–126, S274, and R311; that span reads RY. The active-site Proton acceptor is R338. Glyoxylate is bound by residues R338, E427, and 452–455; that span reads GFLD. Residues E427 and D455 each contribute to the Mg(2+) site. Residue P536 coordinates acetyl-CoA. A Cysteine sulfenic acid (-SOH) modification is found at C617. Catalysis depends on D631, which acts as the Proton donor. C688 carries the cysteine sulfenic acid (-SOH) modification.

It belongs to the malate synthase family. GlcB subfamily. As to quaternary structure, monomer. Mg(2+) serves as cofactor.

Its subcellular location is the cytoplasm. The catalysed reaction is glyoxylate + acetyl-CoA + H2O = (S)-malate + CoA + H(+). It functions in the pathway carbohydrate metabolism; glyoxylate cycle; (S)-malate from isocitrate: step 2/2. Its function is as follows. Involved in the glycolate utilization. Catalyzes the condensation and subsequent hydrolysis of acetyl-coenzyme A (acetyl-CoA) and glyoxylate to form malate and CoA. This chain is Malate synthase G, found in Escherichia coli O6:H1 (strain CFT073 / ATCC 700928 / UPEC).